Here is an 881-residue protein sequence, read N- to C-terminus: Putative outer membrane usher protein YfcU (881 aa).

A signal peptide spans 1–29 (MPDHSLFRLRILPWCIALAMSGSYSSVWA).

Belongs to the fimbrial export usher family.

The protein resides in the cell outer membrane. Functionally, part of the yfcOPQRSUV fimbrial operon. Could contribute to adhesion to various surfaces in specific environmental niches. Increases adhesion to eukaryotic T24 bladder epithelial cells in the absence of fim genes. Probably involved in the export and assembly of fimbrial subunits across the outer membrane. This chain is Putative outer membrane usher protein YfcU (yfcU), found in Escherichia coli (strain K12).